The following is a 1036-amino-acid chain: Pre-mRNA-processing factor 39-2 (1036 aa).

The segment at 1–24 is disordered; sequence MVTTEVRTAVSDKEPLQRSPELDS. HAT repeat units follow at residues 62–94, 96–128, 131–166, 168–201, 278–310, and 312–344; these read DDIEKLCLVYDAFLLEFPLCHGYWRKYAYHKIK, CTLEDAVEVFERAVQAATYSVAVWLDYCAFAVA, EDPHDVSRLFERGLSFIGKDYSCCTLWDKYIEYLLG, QQWSSLANVYLRTLKYPSKKLDLYYKNFRKIAAS, CFETQIRRPYFHVKPLDTNQLDNWHAYLSFGET, and GDFDWAINLYERCLIPCANYTEFWFRYVDFVES. Disordered stretches follow at residues 595–618, 714–767, and 995–1036; these read GISSIVDSPPKEKKESSLDSYGTQ, PSGS…PVGT, and KGDE…ISSI. Low complexity predominate over residues 714–726; sequence PSGSQSPQSYQSQ. Residues 740 to 755 show a composition bias toward basic and acidic residues; it reads RDLNQMHRDSKPRSQE. Over residues 1002-1036 the composition is skewed to polar residues; sequence SMPQGSTTNSDIQKSQESGAVNEANLSSDTSISSI.

It belongs to the PRP39 family.

Its subcellular location is the nucleus. Its function is as follows. Involved in pre-mRNA splicing. This chain is Pre-mRNA-processing factor 39-2, found in Arabidopsis thaliana (Mouse-ear cress).